The sequence spans 318 residues: tRNA-cytidine(32) 2-sulfurtransferase (318 aa).

The short motif at 52 to 57 (SGGKDS) is the PP-loop motif element. 3 residues coordinate [4Fe-4S] cluster: Cys127, Cys130, and Cys218.

This sequence belongs to the TtcA family. As to quaternary structure, homodimer. Mg(2+) serves as cofactor. Requires [4Fe-4S] cluster as cofactor.

It is found in the cytoplasm. The enzyme catalyses cytidine(32) in tRNA + S-sulfanyl-L-cysteinyl-[cysteine desulfurase] + AH2 + ATP = 2-thiocytidine(32) in tRNA + L-cysteinyl-[cysteine desulfurase] + A + AMP + diphosphate + H(+). The protein operates within tRNA modification. Its function is as follows. Catalyzes the ATP-dependent 2-thiolation of cytidine in position 32 of tRNA, to form 2-thiocytidine (s(2)C32). The sulfur atoms are provided by the cysteine/cysteine desulfurase (IscS) system. In Actinobacillus pleuropneumoniae serotype 3 (strain JL03), this protein is tRNA-cytidine(32) 2-sulfurtransferase.